The following is a 244-amino-acid chain: Small ribosomal subunit protein uS3 (244 aa).

The region spanning 39 to 107 (IRELIKKESF…KLIINVEEIK (69 aa)) is the KH type-2 domain. The interval 216–244 (LPVYKNKKNDKNKKRRNNNRKGKSQAAKN) is disordered. The span at 220–238 (KNKKNDKNKKRRNNNRKGK) shows a compositional bias: basic residues.

This sequence belongs to the universal ribosomal protein uS3 family. Part of the 30S ribosomal subunit. Forms a tight complex with proteins S10 and S14.

Binds the lower part of the 30S subunit head. Binds mRNA in the 70S ribosome, positioning it for translation. This chain is Small ribosomal subunit protein uS3, found in Finegoldia magna (strain ATCC 29328 / DSM 20472 / WAL 2508) (Peptostreptococcus magnus).